The chain runs to 886 residues: General transcription factor 3C polypeptide 3 (886 aa).

The disordered stretch occupies residues 1 to 121 (MSGFSPELID…TPEQPTAGDV (121 aa)). Serine 2 is subject to N-acetylserine. Residues 12 to 44 (LEGKISFEEFERRREERKTREKKSLQEKGKLSA) are compositionally biased toward basic and acidic residues. Serine 43 carries the post-translational modification Phosphoserine. The span at 53–63 (VPSSSGINSTK) shows a compositional bias: polar residues. The span at 92–113 (ENEDDEEEEEEEEEEEEEEETP) shows a compositional bias: acidic residues. TPR repeat units lie at residues 149 to 182 (LRGL…APLA), 183 to 216 (YEPF…NPSD), 217 to 250 (TEEW…EPTN), 252 to 284 (RYLW…LSPS), 290 to 323 (MQLA…HQGL), 326 to 361 (MEDV…EKKT), 421 to 454 (GDLY…ERYN), 456 to 489 (AVVW…APLH), 491 to 523 (DARI…DTLA), 733 to 766 (HALC…HPDE), and 811 to 844 (QESF…PPLV). At serine 282 the chain carries Phosphoserine.

Part of the TFIIIC subcomplex TFIIIC2, consisting of six subunits, GTF3C1, GTF3C2, GTF3C3, GTF3C4, GTF3C5 and GTF3C6. Interacts with BRF1 and TBP.

The protein resides in the nucleus. Functionally, involved in RNA polymerase III-mediated transcription. Integral, tightly associated component of the DNA-binding TFIIIC2 subcomplex that directly binds tRNA and virus-associated RNA promoters. The sequence is that of General transcription factor 3C polypeptide 3 (GTF3C3) from Homo sapiens (Human).